The sequence spans 185 residues: Signal peptidase I (185 aa).

At 1–20 (MKSEKEKTSKKSAVLDWAKA) the chain is on the cytoplasmic side. Residues 21 to 41 (IIIAVVLAVLIRNFLFAPYVV) traverse the membrane as a helical segment. Topologically, residues 42–185 (DGESMEPTLH…FPFNEIRKTK (144 aa)) are extracellular. Catalysis depends on residues Ser45 and Lys85.

Belongs to the peptidase S26 family.

It is found in the cell membrane. It catalyses the reaction Cleavage of hydrophobic, N-terminal signal or leader sequences from secreted and periplasmic proteins.. This Bacillus amyloliquefaciens (Bacillus velezensis) protein is Signal peptidase I (sipA).